We begin with the raw amino-acid sequence, 163 residues long: Olfactory marker protein (163 aa).

The residue at position 2 (Ala-2) is an N-acetylalanine.

It belongs to the olfactory marker protein family. In terms of assembly, interacts with BEX1 and BEX2. As to expression, uniquely associated with mature olfactory receptor neurons.

The protein resides in the cytoplasm. In terms of biological role, may act as a modulator of the olfactory signal-transduction cascade. This chain is Olfactory marker protein (Omp), found in Rattus norvegicus (Rat).